The primary structure comprises 327 residues: Annexin A8-like protein 1 (327 aa).

Annexin repeat units follow at residues phenylalanine 21–tyrosine 92, proline 93–glutamine 164, alanine 177–lysine 249, and asparagine 253–glycine 324. Residues methionine 266, glycine 268, glycine 270, and aspartate 310 each coordinate Ca(2+).

The protein belongs to the annexin family.

The chain is Annexin A8-like protein 1 from Homo sapiens (Human).